The chain runs to 213 residues: Phosphoribosylformylglycinamidine synthase subunit PurQ (213 aa).

Residues 5–213 (ACVVVYPGSN…FQSILNYLKR (209 aa)) form the Glutamine amidotransferase type-1 domain. The active-site Nucleophile is Cys86. Catalysis depends on residues His186 and Glu188.

In terms of assembly, part of the FGAM synthase complex composed of 1 PurL, 1 PurQ and 2 PurS subunits.

The protein resides in the cytoplasm. The catalysed reaction is N(2)-formyl-N(1)-(5-phospho-beta-D-ribosyl)glycinamide + L-glutamine + ATP + H2O = 2-formamido-N(1)-(5-O-phospho-beta-D-ribosyl)acetamidine + L-glutamate + ADP + phosphate + H(+). The enzyme catalyses L-glutamine + H2O = L-glutamate + NH4(+). The protein operates within purine metabolism; IMP biosynthesis via de novo pathway; 5-amino-1-(5-phospho-D-ribosyl)imidazole from N(2)-formyl-N(1)-(5-phospho-D-ribosyl)glycinamide: step 1/2. Functionally, part of the phosphoribosylformylglycinamidine synthase complex involved in the purines biosynthetic pathway. Catalyzes the ATP-dependent conversion of formylglycinamide ribonucleotide (FGAR) and glutamine to yield formylglycinamidine ribonucleotide (FGAM) and glutamate. The FGAM synthase complex is composed of three subunits. PurQ produces an ammonia molecule by converting glutamine to glutamate. PurL transfers the ammonia molecule to FGAR to form FGAM in an ATP-dependent manner. PurS interacts with PurQ and PurL and is thought to assist in the transfer of the ammonia molecule from PurQ to PurL. This Thermotoga maritima (strain ATCC 43589 / DSM 3109 / JCM 10099 / NBRC 100826 / MSB8) protein is Phosphoribosylformylglycinamidine synthase subunit PurQ.